A 1347-amino-acid chain; its full sequence is G-protein coupled receptor-associated sorting protein 1 (1347 aa).

Disordered regions lie at residues 1–75 (MTRA…AYAK), 145–174 (ESIP…SWYR), and 188–281 (DFKW…NSRS). A compositionally biased stretch (low complexity) spans 21-33 (ENANAAEVEPEAP). Basic residues predominate over residues 211–226 (FRPRKSMKANNRFRHM). A compositionally biased stretch (basic and acidic residues) spans 263-278 (PKDKTKVWSKPKEEPN). Residue Ser-295 is modified to Phosphoserine. 3 disordered regions span residues 310–344 (GEEA…AMSG), 364–396 (FSKS…QEAR), and 460–485 (QVSS…SKSM). Residues 316 to 325 (RSKPRARKGV) are compositionally biased toward basic residues. Residues 370–396 (KKEPRTRAVPKEEVKTKARASTKQEAR) show a composition bias toward basic and acidic residues. Residues 461–484 (VSSFCLGSGKKSSMESGPKATSKS) show a composition bias toward polar residues. Phosphoserine is present on residues Ser-619 and Ser-626. Thr-860 is subject to Phosphothreonine. The residue at position 862 (Ser-862) is a Phosphoserine.

Belongs to the GPRASP family. Interacts with cytoplasmic tails of a variety of G-protein coupled receptors such as delta opioid receptor/OPRD1, beta-2 adrenergic receptor/ADRB2 and D4 dopamine receptor/DRD4 as well as D2 dopamine receptor/DRD2. Interacts with PER1. Interacts with BECN2; the interaction is direct. In terms of tissue distribution, expressed in the brain, with higher expression in the hippocampus, hypothalamus and olfactory bulb.

It is found in the cytoplasm. Functionally, modulates lysosomal sorting and functional down-regulation of a variety of G-protein coupled receptors. Targets receptors for degradation in lysosomes via its interaction with BECN2. In Mus musculus (Mouse), this protein is G-protein coupled receptor-associated sorting protein 1 (Gprasp1).